Here is a 286-residue protein sequence, read N- to C-terminus: Acetylglutamate kinase (286 aa).

Substrate is bound by residues 70 to 71, arginine 92, and asparagine 184; that span reads GG.

Belongs to the acetylglutamate kinase family. ArgB subfamily.

The protein resides in the cytoplasm. It catalyses the reaction N-acetyl-L-glutamate + ATP = N-acetyl-L-glutamyl 5-phosphate + ADP. It participates in amino-acid biosynthesis; L-arginine biosynthesis; N(2)-acetyl-L-ornithine from L-glutamate: step 2/4. In terms of biological role, catalyzes the ATP-dependent phosphorylation of N-acetyl-L-glutamate. The protein is Acetylglutamate kinase of Ruegeria sp. (strain TM1040) (Silicibacter sp.).